The chain runs to 269 residues: Probable aquaporin TIP5-1 (269 aa).

5 helical membrane passes run 19 to 39, 54 to 74, 84 to 104, 139 to 159, and 177 to 197; these read AYFAEFFSTFLFVFIAVGSTI, SLMATAVAQAFGLFAAVFIAA, AVTFAYAIGGHITVPSAIFYW, FGAGILEGVLTFMVVYTVHVA, and ALGALVVGAVTGACVLAAGSL. The short motif at 82–84 is the NPA 1 element; that stretch reads NPA. The short motif at 203-205 is the NPA 2 element; it reads NPA. A helical membrane pass occupies residues 223–243; the sequence is YWAGPMVGAAVAALVHQALVF.

The protein belongs to the MIP/aquaporin (TC 1.A.8) family. TIP (TC 1.A.8.10) subfamily. Expressed in leaves and anthers, and at lower levels in roots.

Its subcellular location is the vacuole membrane. Its function is as follows. Aquaporins facilitate the transport of water and small neutral solutes across cell membranes. May be involved in transport from the vacuolar compartment to the cytoplasm. This is Probable aquaporin TIP5-1 (TIP5;1) from Oryza sativa subsp. japonica (Rice).